A 178-amino-acid chain; its full sequence is Conodipine-P3 (178 aa).

Positions 1-24 are cleaved as a signal peptide; it reads MKLLAPVLWAMAALGVTWLVAVDS. The residue at position 38 (proline 38) is a 4-hydroxyproline. 4-hydroxyproline; partial is present on residues proline 42 and proline 49. Histidine 54 is a catalytic residue. The propeptide at 98–130 is interchain peptide; that stretch reads KREVTSHRATSIAHSRLWKTALDQKSFLNRKAR. Glutamine 131 carries the pyrrolidone carboxylic acid modification. Proline 137 bears the 4-hydroxyproline; partial mark.

Belongs to the phospholipase A2 family. Group IX subfamily. As to quaternary structure, heterodimer of an alpha and a beta chain; probably disulfide-linked. Ca(2+) serves as cofactor. Expressed by the venom duct.

It localises to the secreted. The enzyme catalyses a 1,2-diacyl-sn-glycero-3-phosphocholine + H2O = a 1-acyl-sn-glycero-3-phosphocholine + a fatty acid + H(+). Catalyzes the calcium-dependent hydrolysis of the 2-acyl groups in 3-sn-phosphoglycerides. The polypeptide is Conodipine-P3 (Conus purpurascens (Purple cone)).